A 113-amino-acid chain; its full sequence is Propane 2-monooxygenase, effector component (113 aa).

Belongs to the TmoD/XamoD family. The propane 2-monooxygenase multicomponent enzyme system is composed of an electron transfer component and a monooxygenase component interacting with the effector protein PrmD. The electron transfer component is composed of a reductase (PrmB), and the monooxygenase component is formed by a large subunit (PrmA) and a small subunit (PrmC).

Its function is as follows. Effector component of the propane 2-monooxygenase multicomponent enzyme system which is involved in the degradation of propane via the O2-dependent hydroxylation of propane. The polypeptide is Propane 2-monooxygenase, effector component (Rhodococcus jostii (strain RHA1)).